The primary structure comprises 483 residues: Regulatory protein ViaA (483 aa).

This sequence belongs to the ViaA family. In terms of assembly, homodimer. Interacts with RavA.

It localises to the cytoplasm. Its function is as follows. Component of the RavA-ViaA chaperone complex, which may act on the membrane to optimize the function of some of the respiratory chains. ViaA stimulates the ATPase activity of RavA. The chain is Regulatory protein ViaA from Escherichia coli O139:H28 (strain E24377A / ETEC).